A 457-amino-acid chain; its full sequence is MRVSAVAVAAPASGSGKTTIATGLIGALRQAGHTVAPFKVGPDFIDPGYHALAAGRPGRNLDPVLVGERLIGPLYAHGVAGADIAVIEGVLGLFDGRIGPAGGAPAAGSTAHVAALLGAPVILVVDARGQSHSVAALLHGFSTFDTATRIAGVILNRVGSARHEQVLRQACDQAGVAVLGAIPRTAELELPTRYLGLVTAVEYGRRARLAVQAMTAVVARHVDLAAVIACAGSQAAHPPWDPVIAVGNTARQPATVAIAAGRAFTFGYAEHAEMLRAAGAEVVEFDPLSETLPEGTDAVVLPGGFPEQFTAELSANDTVRRQINELAAAGAPVHAECAGLLYLVSELDGHPMCGVVAGSARFTQHLKLGYRDAVAVVDSALYSVGERVVGHEFHRTAVTFADSYQPAWVYQGQDVDDVRDGAVHSGVHASYLHTHPAATPGAVARFVAHAACNTPRA.

Positions 255–441 constitute a GATase cobBQ-type domain; it reads TVAIAAGRAF…LHTHPAATPG (187 aa). Cys-337 serves as the catalytic Nucleophile.

Belongs to the CobB/CbiA family. Mg(2+) serves as cofactor.

The enzyme catalyses hydrogenobyrinate + 2 L-glutamine + 2 ATP + 2 H2O = hydrogenobyrinate a,c-diamide + 2 L-glutamate + 2 ADP + 2 phosphate + 2 H(+). It participates in cofactor biosynthesis; adenosylcobalamin biosynthesis; cob(II)yrinate a,c-diamide from precorrin-2 (aerobic route): step 9/10. Functionally, catalyzes the ATP-dependent amidation of the two carboxylate groups at positions a and c of hydrogenobyrinate, using either L-glutamine or ammonia as the nitrogen source. The polypeptide is Hydrogenobyrinate a,c-diamide synthase (Mycobacterium bovis (strain ATCC BAA-935 / AF2122/97)).